The sequence spans 359 residues: Thymidine kinase (359 aa).

An ATP-binding site is contributed by 17–24 (GAHGLGKT). Residue Glu-45 is the Proton acceptor of the active site. Gln-99 contributes to the substrate binding site. Arg-187 contributes to the ATP binding site. Arg-193 is a binding site for substrate.

The protein belongs to the herpesviridae thymidine kinase family. Homodimer.

The enzyme catalyses thymidine + ATP = dTMP + ADP + H(+). Catalyzes the transfer of the gamma-phospho group of ATP to thymidine to generate dTMP in the salvage pathway of pyrimidine synthesis. The dTMP serves as a substrate for DNA polymerase during viral DNA replication. Allows the virus to be reactivated and to grow in non-proliferative cells lacking a high concentration of phosphorylated nucleic acid precursors. The protein is Thymidine kinase of Bos taurus (Bovine).